The primary structure comprises 269 residues: Phosphate import ATP-binding protein PstB 2 (269 aa).

Residues 23–264 enclose the ABC transporter domain; it reads LEVKDLSIYY…PKKQKTEDYI (242 aa). ATP is bound at residue 55 to 62; it reads GPSGCGKS.

This sequence belongs to the ABC transporter superfamily. Phosphate importer (TC 3.A.1.7) family. The complex is composed of two ATP-binding proteins (PstB), two transmembrane proteins (PstC and PstA) and a solute-binding protein (PstS).

It is found in the cell membrane. It catalyses the reaction phosphate(out) + ATP + H2O = ADP + 2 phosphate(in) + H(+). Its function is as follows. Part of the ABC transporter complex PstSACB involved in phosphate import. Responsible for energy coupling to the transport system. This Bacillus subtilis (strain 168) protein is Phosphate import ATP-binding protein PstB 2.